An 83-amino-acid polypeptide reads, in one-letter code: UPF0297 protein LCK_00468 (83 aa).

The protein belongs to the UPF0297 family.

In Leuconostoc citreum (strain KM20), this protein is UPF0297 protein LCK_00468.